A 622-amino-acid polypeptide reads, in one-letter code: Transcription factor SKN7 (622 aa).

Residues 1 to 12 (MSFSTINSNVNK) show a composition bias toward polar residues. Residues 1–29 (MSFSTINSNVNKTTGDSNNNTTENSSTAD) are disordered. Low complexity predominate over residues 13–27 (TTGDSNNNTTENSST). The segment at 84-190 (ANEFVRKLFR…GLDNIKRKIP (107 aa)) is DNA-binding domain. A hydrophobic repeat HR-A/B region spans residues 212 to 303 (TNPNNPSGSL…NNFNTLCSTL (92 aa)). The stretch at 240 to 260 (FGNLRRRVDKLQKELDMSKME) forms a coiled coil. One can recognise a Response regulatory domain in the interval 378–492 (HVLLVEDDAV…DLHSILIRYL (115 aa)). Residue Asp-427 is modified to 4-aspartylphosphate. 2 disordered regions span residues 501-579 (QQLP…QHHN) and 599-622 (TVPH…NQLS). The segment covering 512–527 (THSNTNTANSNPNTIN) has biased composition (low complexity). A compositionally biased stretch (polar residues) spans 537 to 554 (DNPSTTTPVTPGASISSA). Residues 555–578 (QHVQQGQQEQQHQIFHAQQQQQHH) show a composition bias toward low complexity. The segment covering 600-622 (VPHSSMGSTPQLPQSTLQENQLS) has biased composition (polar residues).

It belongs to the SKN7 family. As to quaternary structure, homotrimer. The phosphorelay mechanism involves the sequential transfer of a phosphate group from 'His-576' (H1) to 'Asp-1144' (D1) of SLN1, then to 'His-64' (H2) of YPD1 and finally to Asp-427 (D2) of SKN7.

It is found in the nucleus. In terms of biological role, transcription factor that is part of a SLN1-YPD1-SKN7 two-component regulatory system, which controls gene expression in response to changes in the osmolarity of the extracellular environment. Under low osmotic conditions, phosphorylated and activated by the phosphorelay intermediate protein YPD1. Also activated in response to oxidative stress, independent on the two-component regulatory system. Regulates heat shock genes in response to oxidative stress and genes involved in cell wall integrity in response to osmotic changes. This chain is Transcription factor SKN7 (SKN7), found in Saccharomyces cerevisiae (strain ATCC 204508 / S288c) (Baker's yeast).